Reading from the N-terminus, the 324-residue chain is UPF0158 protein CPn_0518/CP_0235/CPj0518/CpB0539 (324 aa).

It belongs to the UPF0158 family.

The protein is UPF0158 protein CPn_0518/CP_0235/CPj0518/CpB0539 of Chlamydia pneumoniae (Chlamydophila pneumoniae).